The sequence spans 189 residues: Interferon alpha-A (189 aa).

A signal peptide spans 1–23; it reads MAPAWSFLLSLLLLSCNAICSLG. Cystine bridges form between Cys-24/Cys-122 and Cys-52/Cys-162.

The protein belongs to the alpha/beta interferon family.

It is found in the secreted. Produced by macrophages, IFN-alpha have antiviral activities. Interferon stimulates the production of two enzymes: a protein kinase and an oligoadenylate synthetase. This Bos taurus (Bovine) protein is Interferon alpha-A (IFNAA).